The sequence spans 202 residues: Securin (202 aa).

At A2 the chain carries N-acetylalanine. A disordered region spans residues 35–94 (LDGRSQVSTPRFGKTFDAPPALPKATRKALGTVNRATEKSVKTKGPLKQKQPSFSAKKMT). A D-box motif is present at residues 61–64 (RKAL). 2 short sequence motifs (TEK-box) span residues 71–73 (TEK) and 94–96 (TEK). The short motif at 163 to 173 (PPSPVRMPSPP) is the SH3-binding element. S165 carries the phosphoserine; by CDK1 modification.

Belongs to the securin family. As to quaternary structure, interacts with RPS10 and DNAJA1. Interacts with the caspase-like ESPL1, and prevents its protease activity probably by covering its active site. Interacts with TP53 and blocks its activity probably by blocking its binding to DNA. Interacts with the Ku 70 kDa subunit of ds-DNA kinase. Interacts with PTTG1IP. In terms of processing, phosphorylated at Ser-165 by CDK1 during mitosis. Phosphorylated in vitro by ds-DNA kinase. Post-translationally, ubiquitinated through 'Lys-11' linkage of ubiquitin moieties by the anaphase promoting complex (APC) at the onset of anaphase, conducting to its degradation. 'Lys-11'-linked ubiquitination is mediated by the E2 ligase UBE2C/UBCH10.

It localises to the cytoplasm. Its subcellular location is the nucleus. Its function is as follows. Regulatory protein, which plays a central role in chromosome stability, in the p53/TP53 pathway, and DNA repair. Probably acts by blocking the action of key proteins. During the mitosis, it blocks Separase/ESPL1 function, preventing the proteolysis of the cohesin complex and the subsequent segregation of the chromosomes. At the onset of anaphase, it is ubiquitinated, conducting to its destruction and to the liberation of ESPL1. Its function is however not limited to a blocking activity, since it is required to activate ESPL1. Negatively regulates the transcriptional activity and related apoptosis activity of TP53. The negative regulation of TP53 may explain the strong transforming capability of the protein when it is overexpressed. May also play a role in DNA repair via its interaction with Ku, possibly by connecting DNA damage-response pathways with sister chromatid separation. The protein is Securin (PTTG1) of Gorilla gorilla gorilla (Western lowland gorilla).